The chain runs to 232 residues: MAIDLLSTFIKPMHREGTKFVAIFAVVTLVLFLIWEPLGWIGVGLTVWCYYFFRDPVRVTPTREGLIVSPADGVVSLIEPAVPPAELGMGPAPMTRVSVFMSVFDCHVNRAPIGGTVTAVAYRPGKFLNASLDKASEDNERNALAIRLADGRQIAVVQIAGLVARRILCEVREGTPLLTGERFGMIRFGSRLDVYLPEGVQPLVCLGQVMTSGETVLADLTSPEARRTGAAR.

Catalysis depends on Ser-190, which acts as the Schiff-base intermediate with substrate; via pyruvic acid. Ser-190 bears the Pyruvic acid (Ser); by autocatalysis mark.

This sequence belongs to the phosphatidylserine decarboxylase family. PSD-A subfamily. Heterodimer of a large membrane-associated beta subunit and a small pyruvoyl-containing alpha subunit. It depends on pyruvate as a cofactor. Post-translationally, is synthesized initially as an inactive proenzyme. Formation of the active enzyme involves a self-maturation process in which the active site pyruvoyl group is generated from an internal serine residue via an autocatalytic post-translational modification. Two non-identical subunits are generated from the proenzyme in this reaction, and the pyruvate is formed at the N-terminus of the alpha chain, which is derived from the carboxyl end of the proenzyme. The post-translation cleavage follows an unusual pathway, termed non-hydrolytic serinolysis, in which the side chain hydroxyl group of the serine supplies its oxygen atom to form the C-terminus of the beta chain, while the remainder of the serine residue undergoes an oxidative deamination to produce ammonia and the pyruvoyl prosthetic group on the alpha chain.

It is found in the cell membrane. The enzyme catalyses a 1,2-diacyl-sn-glycero-3-phospho-L-serine + H(+) = a 1,2-diacyl-sn-glycero-3-phosphoethanolamine + CO2. Its pathway is phospholipid metabolism; phosphatidylethanolamine biosynthesis; phosphatidylethanolamine from CDP-diacylglycerol: step 2/2. In terms of biological role, catalyzes the formation of phosphatidylethanolamine (PtdEtn) from phosphatidylserine (PtdSer). The sequence is that of Phosphatidylserine decarboxylase proenzyme from Cereibacter sphaeroides (strain KD131 / KCTC 12085) (Rhodobacter sphaeroides).